A 362-amino-acid polypeptide reads, in one-letter code: Alpha-2-HS-glycoprotein (362 aa).

Residues 1 to 15 (LILFFCLAQLWGCRA) form the signal peptide. Residues 24-130 (YREPACDDVE…QFSVLFAKCD (107 aa)) form the Cystatin fetuin-A-type 1 domain. 6 cysteine pairs are disulfide-bonded: Cys29/Cys353, Cys86/Cys97, Cys111/Cys129, Cys143/Cys146, Cys205/Cys216, and Cys227/Cys244. N-linked (GlcNAc...) asparagine glycosylation is present at Asn96. Residues Ser131, Ser132, and Ser135 each carry the phosphoserine modification. A Cystatin fetuin-A-type 2 domain is found at 141–252 (KVCPNCPLLA…TCTVFQTQPV (112 aa)). N-linked (GlcNAc...) asparagine glycosylation is found at Asn153 and Asn173. Phosphoserine is present on residues Ser314, Ser318, Ser321, and Ser323. Thr332 carries an O-linked (GalNAc...) threonine glycan.

Belongs to the fetuin family. Phosphorylated by FAM20C in the extracellular medium. In terms of tissue distribution, expressed by the liver and secreted in plasma.

Its subcellular location is the secreted. In Sus scrofa (Pig), this protein is Alpha-2-HS-glycoprotein (AHSG).